Consider the following 208-residue polypeptide: Neuroendocrine protein 7B2 (208 aa).

A signal peptide spans 1–26 (MGMYSAIPLALPMVLLMVYGLTPSLG). An intrachain disulfide couples Cys120 to Cys129. Ser204 bears the Phosphoserine mark.

It belongs to the 7B2 family. As to quaternary structure, interacts with pcsk2 early in the secretory pathway. Dissociation occurs at later stages. Proteolytically cleaved in the Golgi by a furin-like convertase to generate bioactive peptides. Post-translationally, sulfated on tyrosine residues.

The protein resides in the secreted. Its function is as follows. Acts as a molecular chaperone for pcsk2, preventing its premature activation in the regulated secretory pathway. Binds to inactive pcsk2 in the endoplasmic reticulum and facilitates its transport from there to later compartments of the secretory pathway where it is proteolytically matured and activated. Also required for cleavage of pcsk2 but does not appear to be involved in its folding. The chain is Neuroendocrine protein 7B2 (scg5.L) from Xenopus laevis (African clawed frog).